A 116-amino-acid polypeptide reads, in one-letter code: ATP-dependent Clp protease adapter protein ClpS (116 aa).

Residues 1 to 11 (MRRFNTIMQGK) are compositionally biased toward polar residues. A disordered region spans residues 1–23 (MRRFNTIMQGKTNGGNGPESGTV).

This sequence belongs to the ClpS family. Binds to the N-terminal domain of the chaperone ClpA.

Its function is as follows. Involved in the modulation of the specificity of the ClpAP-mediated ATP-dependent protein degradation. The chain is ATP-dependent Clp protease adapter protein ClpS from Brucella melitensis biotype 2 (strain ATCC 23457).